Here is a 247-residue protein sequence, read N- to C-terminus: NifU-like scaffold protein (247 aa).

The protein belongs to the NifU family. As to quaternary structure, homodimer.

It localises to the plastid. It is found in the apicoplast. It functions in the pathway cofactor biosynthesis; iron-sulfur cluster biosynthesis. In terms of biological role, binds and transfers [4Fe-4S] iron-sulfur clusters to target proteins. In Plasmodium falciparum (isolate 3D7), this protein is NifU-like scaffold protein.